A 139-amino-acid polypeptide reads, in one-letter code: Histone H2B (139 aa).

The segment covering 1 to 37 has biased composition (low complexity); the sequence is MAPKSVASKAPASQASKAPAAASKAPAKAAKTSAAPK. The disordered stretch occupies residues 1–48; that stretch reads MAPKSVASKAPASQASKAPAAASKAPAKAAKTSAAPKDGAKKRSKKRV. Lys9 bears the N6-acetyllysine; alternate mark. Lys9 participates in a covalent cross-link: Glycyl lysine isopeptide (Lys-Gly) (interchain with G-Cter in SUMO); alternate. Ser13 is modified (phosphoserine). N6-acetyllysine is present on Lys17. A Glycyl lysine isopeptide (Lys-Gly) (interchain with G-Cter in ubiquitin) cross-link involves residue Lys134.

This sequence belongs to the histone H2B family. The nucleosome is a histone octamer containing two molecules each of H2A, H2B, H3 and H4 assembled in one H3-H4 heterotetramer and two H2A-H2B heterodimers. The octamer wraps approximately 147 bp of DNA. In terms of processing, monoubiquitinated by the UBC2-BRE1 complex to form H2BK123ub1. H2BK123ub1 gives a specific tag for epigenetic transcriptional activation and is also prerequisite for H3K4me and H3K79me formation. H2BK123ub1 also modulates the formation of double-strand breaks during meiosis and is a prerequisite for DNA-damage checkpoint activation. Phosphorylated to form H2BS10ph during progression through meiotic prophase. May be correlated with chromosome condensation. Post-translationally, acetylation of N-terminal lysines and particularly formation of H2BK11ac has a positive effect on transcription. In terms of processing, sumoylation to form H2BK6su occurs preferentially near the telomeres and represses gene transcription.

The protein localises to the nucleus. The protein resides in the chromosome. In terms of biological role, core component of nucleosome. Nucleosomes wrap and compact DNA into chromatin, limiting DNA accessibility to the cellular machineries which require DNA as a template. Histones thereby play a central role in transcription regulation, DNA repair, DNA replication and chromosomal stability. DNA accessibility is regulated via a complex set of post-translational modifications of histones, also called histone code, and nucleosome remodeling. In Cryptococcus neoformans var. neoformans serotype D (strain B-3501A) (Filobasidiella neoformans), this protein is Histone H2B (HTB1).